Consider the following 177-residue polypeptide: Adenine phosphoribosyltransferase (177 aa).

It belongs to the purine/pyrimidine phosphoribosyltransferase family. As to quaternary structure, homodimer.

Its subcellular location is the cytoplasm. The enzyme catalyses AMP + diphosphate = 5-phospho-alpha-D-ribose 1-diphosphate + adenine. It participates in purine metabolism; AMP biosynthesis via salvage pathway; AMP from adenine: step 1/1. In terms of biological role, catalyzes a salvage reaction resulting in the formation of AMP, that is energically less costly than de novo synthesis. The polypeptide is Adenine phosphoribosyltransferase (Leptospira biflexa serovar Patoc (strain Patoc 1 / Ames)).